The primary structure comprises 177 residues: PLAC8-like protein 1 (177 aa).

Belongs to the cornifelin family.

This Mus musculus (Mouse) protein is PLAC8-like protein 1 (Plac8l1).